The chain runs to 245 residues: Biosynthetic peptidoglycan transglycosylase (245 aa).

A helical membrane pass occupies residues V20–A42.

Belongs to the glycosyltransferase 51 family.

The protein resides in the cell inner membrane. The enzyme catalyses [GlcNAc-(1-&gt;4)-Mur2Ac(oyl-L-Ala-gamma-D-Glu-L-Lys-D-Ala-D-Ala)](n)-di-trans,octa-cis-undecaprenyl diphosphate + beta-D-GlcNAc-(1-&gt;4)-Mur2Ac(oyl-L-Ala-gamma-D-Glu-L-Lys-D-Ala-D-Ala)-di-trans,octa-cis-undecaprenyl diphosphate = [GlcNAc-(1-&gt;4)-Mur2Ac(oyl-L-Ala-gamma-D-Glu-L-Lys-D-Ala-D-Ala)](n+1)-di-trans,octa-cis-undecaprenyl diphosphate + di-trans,octa-cis-undecaprenyl diphosphate + H(+). It participates in cell wall biogenesis; peptidoglycan biosynthesis. Its function is as follows. Peptidoglycan polymerase that catalyzes glycan chain elongation from lipid-linked precursors. In Burkholderia cenocepacia (strain HI2424), this protein is Biosynthetic peptidoglycan transglycosylase.